Here is a 172-residue protein sequence, read N- to C-terminus: 3-hydroxydecanoyl-[acyl-carrier-protein] dehydratase (172 aa).

The active site involves histidine 71.

It belongs to the thioester dehydratase family. FabA subfamily. Homodimer.

The protein resides in the cytoplasm. It carries out the reaction a (3R)-hydroxyacyl-[ACP] = a (2E)-enoyl-[ACP] + H2O. It catalyses the reaction (3R)-hydroxydecanoyl-[ACP] = (2E)-decenoyl-[ACP] + H2O. The catalysed reaction is (2E)-decenoyl-[ACP] = (3Z)-decenoyl-[ACP]. Its pathway is lipid metabolism; fatty acid biosynthesis. Its function is as follows. Necessary for the introduction of cis unsaturation into fatty acids. Catalyzes the dehydration of (3R)-3-hydroxydecanoyl-ACP to E-(2)-decenoyl-ACP and then its isomerization to Z-(3)-decenoyl-ACP. Can catalyze the dehydratase reaction for beta-hydroxyacyl-ACPs with saturated chain lengths up to 16:0, being most active on intermediate chain length. This Pseudoalteromonas atlantica (strain T6c / ATCC BAA-1087) protein is 3-hydroxydecanoyl-[acyl-carrier-protein] dehydratase.